We begin with the raw amino-acid sequence, 405 residues long: Imidazolonepropionase (405 aa).

Residues histidine 73 and histidine 75 each contribute to the Fe(3+) site. Zn(2+)-binding residues include histidine 73 and histidine 75. 4-imidazolone-5-propanoate is bound by residues arginine 82, tyrosine 145, and histidine 178. Tyrosine 145 contributes to the N-formimidoyl-L-glutamate binding site. Histidine 243 serves as a coordination point for Fe(3+). Residue histidine 243 coordinates Zn(2+). Glutamine 246 provides a ligand contact to 4-imidazolone-5-propanoate. Residue aspartate 318 coordinates Fe(3+). Aspartate 318 is a Zn(2+) binding site. N-formimidoyl-L-glutamate contacts are provided by asparagine 320 and glycine 322. Threonine 323 is a 4-imidazolone-5-propanoate binding site.

The protein belongs to the metallo-dependent hydrolases superfamily. HutI family. Requires Zn(2+) as cofactor. The cofactor is Fe(3+).

It localises to the cytoplasm. The catalysed reaction is 4-imidazolone-5-propanoate + H2O = N-formimidoyl-L-glutamate. Its pathway is amino-acid degradation; L-histidine degradation into L-glutamate; N-formimidoyl-L-glutamate from L-histidine: step 3/3. Functionally, catalyzes the hydrolytic cleavage of the carbon-nitrogen bond in imidazolone-5-propanoate to yield N-formimidoyl-L-glutamate. It is the third step in the universal histidine degradation pathway. This is Imidazolonepropionase from Brucella suis (strain ATCC 23445 / NCTC 10510).